Reading from the N-terminus, the 254-residue chain is Phosphate import ATP-binding protein PstB (254 aa).

The ABC transporter domain occupies 9-249 (MSVKDLDLFY…PVDKRTEDYI (241 aa)). 41-48 (GPSGCGKS) serves as a coordination point for ATP.

This sequence belongs to the ABC transporter superfamily. Phosphate importer (TC 3.A.1.7) family. In terms of assembly, the complex is composed of two ATP-binding proteins (PstB), two transmembrane proteins (PstC and PstA) and a solute-binding protein (PstS).

The protein resides in the cell membrane. The catalysed reaction is phosphate(out) + ATP + H2O = ADP + 2 phosphate(in) + H(+). Its function is as follows. Part of the ABC transporter complex PstSACB involved in phosphate import. Responsible for energy coupling to the transport system. In Clostridioides difficile (strain 630) (Peptoclostridium difficile), this protein is Phosphate import ATP-binding protein PstB.